Reading from the N-terminus, the 174-residue chain is MALAHRLCRLPRLLPLAAAAAASKPYLPGKPSPAPPPPLSSPPPFPSLSRLFSTTPSSSGDSSMVVVGSAESFTSIMSKVEAEKLPAVFYYTAVWCGPCRAMAPVISKLSSRYPKIPIYKVDIDMDGVGSKLSDLKIFSVPTFHFYYQGRKTGEVVGANATKLESTMESLHKQL.

Residues 1–59 constitute a mitochondrion transit peptide; sequence MALAHRLCRLPRLLPLAAAAAASKPYLPGKPSPAPPPPLSSPPPFPSLSRLFSTTPSSS. A Thioredoxin domain is found at 60–172; that stretch reads GDSSMVVVGS…LESTMESLHK (113 aa). Residues Cys96 and Cys99 each act as nucleophile in the active site. A disulfide bridge links Cys96 with Cys99.

It belongs to the thioredoxin family. Plant O-type subfamily.

It localises to the mitochondrion. Probable thiol-disulfide oxidoreductase that may participate in various redox reactions. The protein is Thioredoxin O, mitochondrial of Oryza sativa subsp. japonica (Rice).